The primary structure comprises 449 residues: Bifunctional protein GlmU (449 aa).

Residues 1-230 (MASSKLAVIV…EAELLGVNAR (230 aa)) form a pyrophosphorylase region. UDP-N-acetyl-alpha-D-glucosamine is bound by residues 11 to 14 (LAAG), Lys-25, Gln-74, 79 to 80 (GT), 102 to 104 (YGD), Gly-142, Glu-156, Asn-171, and Asn-228. A Mg(2+)-binding site is contributed by Asp-104. Position 228 (Asn-228) interacts with Mg(2+). A linker region spans residues 231 to 251 (SELAVAEALVQARLREAAMDN). Positions 252–449 (GATLIDPATV…QQAAKKAKKD (198 aa)) are N-acetyltransferase. UDP-N-acetyl-alpha-D-glucosamine-binding residues include Arg-317 and Lys-335. Residue His-347 is the Proton acceptor of the active site. Residues Tyr-350 and Asn-361 each coordinate UDP-N-acetyl-alpha-D-glucosamine. Acetyl-CoA contacts are provided by residues Ala-364, 370–371 (NY), Ser-389, Ala-407, and Arg-424.

It in the N-terminal section; belongs to the N-acetylglucosamine-1-phosphate uridyltransferase family. This sequence in the C-terminal section; belongs to the transferase hexapeptide repeat family. Homotrimer. The cofactor is Mg(2+).

The protein resides in the cytoplasm. It carries out the reaction alpha-D-glucosamine 1-phosphate + acetyl-CoA = N-acetyl-alpha-D-glucosamine 1-phosphate + CoA + H(+). The enzyme catalyses N-acetyl-alpha-D-glucosamine 1-phosphate + UTP + H(+) = UDP-N-acetyl-alpha-D-glucosamine + diphosphate. It participates in nucleotide-sugar biosynthesis; UDP-N-acetyl-alpha-D-glucosamine biosynthesis; N-acetyl-alpha-D-glucosamine 1-phosphate from alpha-D-glucosamine 6-phosphate (route II): step 2/2. Its pathway is nucleotide-sugar biosynthesis; UDP-N-acetyl-alpha-D-glucosamine biosynthesis; UDP-N-acetyl-alpha-D-glucosamine from N-acetyl-alpha-D-glucosamine 1-phosphate: step 1/1. It functions in the pathway bacterial outer membrane biogenesis; LPS lipid A biosynthesis. Catalyzes the last two sequential reactions in the de novo biosynthetic pathway for UDP-N-acetylglucosamine (UDP-GlcNAc). The C-terminal domain catalyzes the transfer of acetyl group from acetyl coenzyme A to glucosamine-1-phosphate (GlcN-1-P) to produce N-acetylglucosamine-1-phosphate (GlcNAc-1-P), which is converted into UDP-GlcNAc by the transfer of uridine 5-monophosphate (from uridine 5-triphosphate), a reaction catalyzed by the N-terminal domain. In Paramagnetospirillum magneticum (strain ATCC 700264 / AMB-1) (Magnetospirillum magneticum), this protein is Bifunctional protein GlmU.